We begin with the raw amino-acid sequence, 373 residues long: Anhydro-N-acetylmuramic acid kinase (373 aa).

Position 12 to 19 (12 to 19 (GTSLDGVD)) interacts with ATP.

The protein belongs to the anhydro-N-acetylmuramic acid kinase family.

The enzyme catalyses 1,6-anhydro-N-acetyl-beta-muramate + ATP + H2O = N-acetyl-D-muramate 6-phosphate + ADP + H(+). It functions in the pathway amino-sugar metabolism; 1,6-anhydro-N-acetylmuramate degradation. Its pathway is cell wall biogenesis; peptidoglycan recycling. Its function is as follows. Catalyzes the specific phosphorylation of 1,6-anhydro-N-acetylmuramic acid (anhMurNAc) with the simultaneous cleavage of the 1,6-anhydro ring, generating MurNAc-6-P. Is required for the utilization of anhMurNAc either imported from the medium or derived from its own cell wall murein, and thus plays a role in cell wall recycling. The polypeptide is Anhydro-N-acetylmuramic acid kinase (Salmonella agona (strain SL483)).